Here is a 120-residue protein sequence, read N- to C-terminus: UPF0231 protein YacL (120 aa).

Belongs to the UPF0231 family.

The chain is UPF0231 protein YacL from Salmonella agona (strain SL483).